The chain runs to 144 residues: MLDIKKIKEILPHRYPFLLVDRVISVEEGKKVTAIKNVTANEEFFNGHFPEYPVMPGVLIVEALAQTSGIAMMQSEANKGKIGLFAGIDGCRFKRQVVPGDQLLLEAEITRMRGAIAKAKVKATVEGDLVCEAEIMFALSDLPQ.

His48 is a catalytic residue.

It belongs to the thioester dehydratase family. FabZ subfamily.

The protein localises to the cytoplasm. It carries out the reaction a (3R)-hydroxyacyl-[ACP] = a (2E)-enoyl-[ACP] + H2O. Involved in unsaturated fatty acids biosynthesis. Catalyzes the dehydration of short chain beta-hydroxyacyl-ACPs and long chain saturated and unsaturated beta-hydroxyacyl-ACPs. The polypeptide is 3-hydroxyacyl-[acyl-carrier-protein] dehydratase FabZ (Listeria innocua serovar 6a (strain ATCC BAA-680 / CLIP 11262)).